The sequence spans 131 residues: Small ribosomal subunit protein uS8 (131 aa).

It belongs to the universal ribosomal protein uS8 family. In terms of assembly, part of the 30S ribosomal subunit. Contacts proteins S5 and S12.

Functionally, one of the primary rRNA binding proteins, it binds directly to 16S rRNA central domain where it helps coordinate assembly of the platform of the 30S subunit. In Bordetella avium (strain 197N), this protein is Small ribosomal subunit protein uS8.